The sequence spans 336 residues: Tyrosine phosphatase-like protein H1 (336 aa).

The Tyrosine-protein phosphatase domain maps to 27–295 (IKKEHHKLMK…EICYRVLCEA (269 aa)).

This sequence belongs to the protein-tyrosine phosphatase family.

The polypeptide is Tyrosine phosphatase-like protein H1 (H1) (Microplitis demolitor (Parasitoid wasp)).